Consider the following 134-residue polypeptide: Small ribosomal subunit protein uS8c (134 aa).

This sequence belongs to the universal ribosomal protein uS8 family. In terms of assembly, part of the 30S ribosomal subunit.

It localises to the plastid. Its subcellular location is the chloroplast. One of the primary rRNA binding proteins, it binds directly to 16S rRNA central domain where it helps coordinate assembly of the platform of the 30S subunit. This Capsella bursa-pastoris (Shepherd's purse) protein is Small ribosomal subunit protein uS8c (rps8).